We begin with the raw amino-acid sequence, 429 residues long: Glutamate-1-semialdehyde 2,1-aminomutase (429 aa).

Position 267 is an N6-(pyridoxal phosphate)lysine (K267).

This sequence belongs to the class-III pyridoxal-phosphate-dependent aminotransferase family. HemL subfamily. In terms of assembly, homodimer. It depends on pyridoxal 5'-phosphate as a cofactor.

Its subcellular location is the cytoplasm. It catalyses the reaction (S)-4-amino-5-oxopentanoate = 5-aminolevulinate. The protein operates within porphyrin-containing compound metabolism; protoporphyrin-IX biosynthesis; 5-aminolevulinate from L-glutamyl-tRNA(Glu): step 2/2. The protein is Glutamate-1-semialdehyde 2,1-aminomutase of Stenotrophomonas maltophilia (strain K279a).